The following is a 425-amino-acid chain: Enolase (425 aa).

Residues 31 to 54 (TGSAIVPSGASTGEKEAVELRDSD) form a disordered region. Basic and acidic residues predominate over residues 43-54 (GEKEAVELRDSD). Gln-162 is a binding site for (2R)-2-phosphoglycerate. Catalysis depends on Glu-204, which acts as the Proton donor. Residues Asp-241, Glu-285, and Asp-312 each coordinate Mg(2+). (2R)-2-phosphoglycerate-binding residues include Lys-337, Arg-366, Ser-367, and Lys-388. The active-site Proton acceptor is the Lys-337.

Belongs to the enolase family. Mg(2+) is required as a cofactor.

It is found in the cytoplasm. It localises to the secreted. Its subcellular location is the cell surface. It carries out the reaction (2R)-2-phosphoglycerate = phosphoenolpyruvate + H2O. It functions in the pathway carbohydrate degradation; glycolysis; pyruvate from D-glyceraldehyde 3-phosphate: step 4/5. Its function is as follows. Catalyzes the reversible conversion of 2-phosphoglycerate (2-PG) into phosphoenolpyruvate (PEP). It is essential for the degradation of carbohydrates via glycolysis. The sequence is that of Enolase from Gloeobacter violaceus (strain ATCC 29082 / PCC 7421).